The following is an 876-amino-acid chain: Bifunctional uridylyltransferase/uridylyl-removing enzyme (876 aa).

The segment at 1-332 (MPYQSPITFQ…NNGEEAEAVI (332 aa)) is uridylyltransferase. The segment at 333-692 (IDDDFQRRGN…LSKKATRGGT (360 aa)) is uridylyl-removing. The 123-residue stretch at 451–573 (VDEHSIRLLK…VRDEERLEYL (123 aa)) folds into the HD domain. ACT domains are found at residues 693–777 (EVFI…RIPR) and 800–876 (LMEF…PSAQ).

The protein belongs to the GlnD family. Requires Mg(2+) as cofactor.

It carries out the reaction [protein-PII]-L-tyrosine + UTP = [protein-PII]-uridylyl-L-tyrosine + diphosphate. The enzyme catalyses [protein-PII]-uridylyl-L-tyrosine + H2O = [protein-PII]-L-tyrosine + UMP + H(+). With respect to regulation, uridylyltransferase (UTase) activity is inhibited by glutamine, while glutamine activates uridylyl-removing (UR) activity. Functionally, modifies, by uridylylation and deuridylylation, the PII regulatory proteins (GlnB and homologs), in response to the nitrogen status of the cell that GlnD senses through the glutamine level. Under low glutamine levels, catalyzes the conversion of the PII proteins and UTP to PII-UMP and PPi, while under higher glutamine levels, GlnD hydrolyzes PII-UMP to PII and UMP (deuridylylation). Thus, controls uridylylation state and activity of the PII proteins, and plays an important role in the regulation of nitrogen assimilation and metabolism. The polypeptide is Bifunctional uridylyltransferase/uridylyl-removing enzyme (Vibrio cholerae serotype O1 (strain ATCC 39315 / El Tor Inaba N16961)).